A 642-amino-acid polypeptide reads, in one-letter code: Transcription factor 4 (642 aa).

A compositionally biased stretch (polar residues) spans 1-25 (MFSPPVSSGKNGPTSLASGHFTGSN). The essential for MYOD1 inhibition stretch occupies residues 1-59 (MFSPPVSSGKNGPTSLASGHFTGSNVEDRSSSGSWGNGGHPSPSRNYGDGTPYDHMTSR). 4 disordered regions span residues 1-296 (MFSP…SQTG), 311-354 (HTNN…EGPL), 444-545 (PNQV…MANN), and 609-642 (KRREEEKVSSEPPPLSLAGPHPGMGDASNHMGQM). 3 positions are modified to phosphoserine: serine 42, serine 63, and serine 68. 5 stretches are compositionally biased toward polar residues: residues 83 to 98 (GSYSSYGRESNLQGCH), 112 to 130 (GTLSPTKPGSQYYQYSSNN), 181 to 191 (PAASTFPSSFF), 218 to 230 (GSSSHIPQSSSYC), and 241 to 281 (PSHS…TDSI). Positions 312 to 323 (TNNSFSSNPSTP) are enriched in low complexity. The span at 340-349 (NGGQASSSPN) shows a compositional bias: polar residues. Serine 347 bears the Phosphoserine mark. The interval 354–375 (LHSLQSRIEDRLERLDDAIHVL) is leucine-zipper. 2 stretches are compositionally biased toward low complexity: residues 444-455 (PNQVPVPQLPVQ) and 478-487 (GQSVSSGSSE). Serine 490 is subject to Phosphoserine. 2 stretches are compositionally biased toward basic and acidic residues: residues 502 to 517 (KSSEDKKLDDDKKDIK) and 530 to 545 (PEQKAEREKERRMANN). Positions 539–592 (ERRMANNARERLRVRDINEAFKELGRMVQLHLKSDKPQTKLLILHQAVAVILSL) constitute a bHLH domain. The tract at residues 594 to 617 (QQVRERNLNPKAACLKRREEEKVS) is class A specific domain.

Efficient DNA binding requires dimerization with another bHLH protein. Forms homo- or heterooligomers with myogenin. Interacts with HIVEP2. Interacts with NEUROD2. Interacts with AGBL1. Widely expressed.

Its subcellular location is the nucleus. In terms of biological role, transcription factor that binds to the immunoglobulin enhancer Mu-E5/KE5-motif. Involved in the initiation of neuronal differentiation. Activates transcription by binding to the E box (5'-CANNTG-3'). Binds to the thyroglobulin promoter. The polypeptide is Transcription factor 4 (TCF4) (Canis lupus familiaris (Dog)).